The sequence spans 293 residues: Probable porphobilinogen deaminase (293 aa).

The residue at position 233 (cysteine 233) is an S-(dipyrrolylmethanemethyl)cysteine.

This sequence belongs to the HMBS family. The cofactor is dipyrromethane.

The enzyme catalyses 4 porphobilinogen + H2O = hydroxymethylbilane + 4 NH4(+). It participates in porphyrin-containing compound metabolism; protoporphyrin-IX biosynthesis; coproporphyrinogen-III from 5-aminolevulinate: step 2/4. Functionally, tetrapolymerization of the monopyrrole PBG into the hydroxymethylbilane pre-uroporphyrinogen in several discrete steps. The polypeptide is Probable porphobilinogen deaminase (Saccharolobus islandicus (strain M.16.27) (Sulfolobus islandicus)).